Reading from the N-terminus, the 692-residue chain is Elongation factor G (692 aa).

Residues 8 to 282 (DKTRNIGIMA…AVLDYLPAPT (275 aa)) enclose the tr-type G domain. Residues 17-24 (AHIDAGKT), 81-85 (DTPGH), and 135-138 (NKMD) contribute to the GTP site.

It belongs to the TRAFAC class translation factor GTPase superfamily. Classic translation factor GTPase family. EF-G/EF-2 subfamily.

It localises to the cytoplasm. Catalyzes the GTP-dependent ribosomal translocation step during translation elongation. During this step, the ribosome changes from the pre-translocational (PRE) to the post-translocational (POST) state as the newly formed A-site-bound peptidyl-tRNA and P-site-bound deacylated tRNA move to the P and E sites, respectively. Catalyzes the coordinated movement of the two tRNA molecules, the mRNA and conformational changes in the ribosome. In Bacillus pumilus (strain SAFR-032), this protein is Elongation factor G.